The chain runs to 392 residues: Phosphoglycerate kinase (392 aa).

Residues 21 to 23, Arg-36, 59 to 62, Arg-113, and Arg-146 each bind substrate; these read DLN and HLGR. Residues Lys-197, Glu-319, and 345–348 contribute to the ATP site; that span reads GGDT.

It belongs to the phosphoglycerate kinase family. In terms of assembly, monomer.

It localises to the cytoplasm. It carries out the reaction (2R)-3-phosphoglycerate + ATP = (2R)-3-phospho-glyceroyl phosphate + ADP. It functions in the pathway carbohydrate degradation; glycolysis; pyruvate from D-glyceraldehyde 3-phosphate: step 2/5. The protein is Phosphoglycerate kinase of Alkalilimnicola ehrlichii (strain ATCC BAA-1101 / DSM 17681 / MLHE-1).